The sequence spans 73 residues: RNA-binding protein Hfq (73 aa).

Residues 8 to 68 (DQFLNQIRKE…ISTFAPQKNV (61 aa)) form the Sm domain.

This sequence belongs to the Hfq family. As to quaternary structure, homohexamer.

RNA chaperone that binds small regulatory RNA (sRNAs) and mRNAs to facilitate mRNA translational regulation in response to envelope stress, environmental stress and changes in metabolite concentrations. Also binds with high specificity to tRNAs. The protein is RNA-binding protein Hfq of Bacillus subtilis (strain 168).